The sequence spans 3166 residues: Intermembrane lipid transfer protein VPS13A (3166 aa).

Residues 3-116 (FESVVVEVLN…LMETKQQELK (114 aa)) enclose the Chorein N-terminal domain. 2 TPR repeats span residues 212–245 (LFAYWNVNSEMFYLNDYDESLKALKNGIVNENIV) and 373–406 (LTSKKPSPEILMSLEELEKTLDVFNITIARQQAE). The residue at position 831 (T831) is a Phosphothreonine. S835 carries the post-translational modification Phosphoserine. An FFAT motif is present at residues 838–844 (EFFDAPC). Residues 1343 to 1359 (APSSANKDPETMTSGVT) are compositionally biased toward polar residues. Positions 1343–1365 (APSSANKDPETMTSGVTSPPDHS) are disordered. The residue at position 1410 (S1410) is a Phosphoserine. TPR repeat units lie at residues 1806–1840 (AIVESDSEAENYKVPEYKTAISFYSRDQLNITLSK) and 1999–2034 (ISVFEGDTLLGIASPENEFNIPLASYRSSLSLVPED). One can recognise an SHR-BD domain in the interval 2202–2447 (VAFHSPYWMV…VYYTWADPVG (246 aa)). Required for mitochondrial localization stretches follow at residues 2607–3166 (LQPH…SPRL) and 2743–3166 (EYEV…SPRL). 2 TPR repeats span residues 2716-2750 (ADLVTKAEVTEKTEVEHFHKDVEAFEQEYEVVSSV) and 2852-2890 (ILGLDVLGNPFGLIREFSEGVEAFFYEPYQGAIQGPEEF). The required for lipid droplet localization stretch occupies residues 2945 to 3019 (PAGLREGITR…SSTFQGIKRA (75 aa)).

This sequence belongs to the VPS13 family. In terms of assembly, interacts (via FFAT motif) with VAPA and VAPB. Interacts with RAB7A. Interacts with XK.

The protein localises to the mitochondrion outer membrane. It is found in the endoplasmic reticulum membrane. It localises to the endosome membrane. Its subcellular location is the lysosome membrane. The protein resides in the lipid droplet. The protein localises to the golgi apparatus. It is found in the cytoplasmic vesicle. It localises to the secretory vesicle. Its subcellular location is the neuronal dense core vesicle. Its function is as follows. Mediates the transfer of lipids between membranes at organelle contact sites. Required for the formation or stabilization of ER-mitochondria contact sites which enable transfer of lipids between the ER and mitochondria. Negatively regulates lipid droplet size and motility. Required for efficient lysosomal protein degradation. The polypeptide is Intermembrane lipid transfer protein VPS13A (Mus musculus (Mouse)).